The following is a 531-amino-acid chain: Probable calcium-binding mitochondrial carrier F17E5.2 (531 aa).

4 consecutive EF-hand domains span residues 70-105 (EKEK…QAHI), 106-135 (PASV…NYVI), 136-171 (AHEA…MGVN), and 172-207 (LDDQ…YPST). Ca(2+)-binding residues include Asp-83, Asp-85, Asp-87, Ser-89, and Asp-94. Ca(2+)-binding residues include Asp-149, Asn-151, Asp-153, Glu-155, and Glu-160. Solcar repeat units follow at residues 242-328 (GVWW…IKRW), 338-424 (LSTI…LKSM), and 435-525 (PGVL…VRKQ). The next 6 membrane-spanning stretches (helical) occupy residues 248 to 265 (LVAG…TAPF), 303 to 322 (GNGI…FMCY), 348 to 361 (SSAG…IYPM), 399 to 418 (GYLP…LTVY), 441 to 458 (LACG…SYPL), and 500 to 517 (GITP…ISYV).

The protein belongs to the mitochondrial carrier (TC 2.A.29) family.

Its subcellular location is the mitochondrion inner membrane. In terms of biological role, calcium-dependent mitochondrial solute carrier. The sequence is that of Probable calcium-binding mitochondrial carrier F17E5.2 from Caenorhabditis elegans.